The sequence spans 274 residues: uncharacterized protein (274 aa).

The segment covering 1 to 20 has biased composition (basic and acidic residues); the sequence is MSLEKSLDEIINERTNGFDH. Disordered stretches follow at residues 1–63, 148–217, and 230–274; these read MSLE…HDLD, NLKG…EDLD, and ASTV…MEAV. Basic residues predominate over residues 21-44; that stretch reads KHSRRRGSQNRISKKSRLTYKFKR. Over residues 45-63 the composition is skewed to basic and acidic residues; the sequence is ASKEHNSSPDDGPWQHDLD. The 77-residue stretch at 85–161 folds into the RRM domain; that stretch reads FGVRVENLHY…SEIQISKKSP (77 aa). Over residues 148–160 the composition is skewed to polar residues; it reads NLKGSEIQISKKS. Low complexity-rich tracts occupy residues 181 to 190 and 200 to 211; these read SSRSNRGFNR and RSSSKKSSNNSI. Residues 230 to 245 are compositionally biased toward polar residues; that stretch reads ASTVSSHSSQDFTPSI. A compositionally biased stretch (acidic residues) spans 263-274; that stretch reads LTEEMDLQMEAV.

This is an uncharacterized protein from Schizosaccharomyces pombe (strain 972 / ATCC 24843) (Fission yeast).